Here is a 291-residue protein sequence, read N- to C-terminus: Shikimate dehydrogenase (NADP(+)) (291 aa).

Residues S26–S28 and S73 contribute to the shikimate site. The active-site Proton acceptor is K77. Shikimate is bound by residues N98 and D113. NADP(+)-binding positions include G137–A141 and V238. Y240 lines the shikimate pocket. Position 261 (G261) interacts with NADP(+).

This sequence belongs to the shikimate dehydrogenase family. Homodimer.

It carries out the reaction shikimate + NADP(+) = 3-dehydroshikimate + NADPH + H(+). It participates in metabolic intermediate biosynthesis; chorismate biosynthesis; chorismate from D-erythrose 4-phosphate and phosphoenolpyruvate: step 4/7. Involved in the biosynthesis of the chorismate, which leads to the biosynthesis of aromatic amino acids. Catalyzes the reversible NADPH linked reduction of 3-dehydroshikimate (DHSA) to yield shikimate (SA). This chain is Shikimate dehydrogenase (NADP(+)), found in Listeria monocytogenes serotype 4b (strain F2365).